The following is a 546-amino-acid chain: Probable protein kinase UbiB (546 aa).

A Protein kinase domain is found at 124 to 502; it reads DFEIKPLASA…HVRQGQSRYF (379 aa). ATP contacts are provided by residues 130–138 and lysine 153; that span reads LASASIAQV. Aspartate 288 serves as the catalytic Proton acceptor. Helical transmembrane passes span 501-521 and 522-542; these read YFLG…VSRP and EWGL…FVGW.

The protein belongs to the ABC1 family. UbiB subfamily.

Its subcellular location is the cell inner membrane. The protein operates within cofactor biosynthesis; ubiquinone biosynthesis [regulation]. Functionally, is probably a protein kinase regulator of UbiI activity which is involved in aerobic coenzyme Q (ubiquinone) biosynthesis. This is Probable protein kinase UbiB from Escherichia coli (strain SMS-3-5 / SECEC).